The following is an 84-amino-acid chain: Sulfur carrier protein TusA (84 aa).

The active-site Cysteine persulfide intermediate is the Cys19.

This sequence belongs to the sulfur carrier protein TusA family. As to quaternary structure, interacts with IscS.

The protein resides in the cytoplasm. The protein operates within tRNA modification. Functionally, sulfur carrier protein involved in sulfur trafficking in the cell. Part of a sulfur-relay system required for 2-thiolation during synthesis of 2-thiouridine of the modified wobble base 5-methylaminomethyl-2-thiouridine (mnm(5)s(2)U) in tRNA. Interacts with IscS and stimulates its cysteine desulfurase activity. Accepts an activated sulfur from IscS, which is then transferred to TusD, and thus determines the direction of sulfur flow from IscS to 2-thiouridine formation. Also appears to be involved in sulfur transfer for the biosynthesis of molybdopterin. The protein is Sulfur carrier protein TusA of Proteus mirabilis (strain HI4320).